A 444-amino-acid polypeptide reads, in one-letter code: Radical S-adenosyl methionine domain-containing protein 1, mitochondrial (444 aa).

The transit peptide at M1 to S39 directs the protein to the mitochondrion. Residues H40–H274 enclose the Radical SAM core domain. Y47 serves as a coordination point for S-adenosyl-L-methionine. [4Fe-4S] cluster-binding residues include C53, C57, and C60. Residues G102, G103 to T104, E135, Q162, R174, and D199 each bind S-adenosyl-L-methionine.

It belongs to the anaerobic coproporphyrinogen-III oxidase family. HemW subfamily. [4Fe-4S] cluster serves as cofactor.

The protein resides in the mitochondrion. Its function is as follows. May be a heme chaperone, appears to bind heme. Homologous bacterial proteins do not have oxygen-independent coproporphyrinogen-III oxidase activity. Binds 1 [4Fe-4S] cluster. The cluster is coordinated with 3 cysteines and an exchangeable S-adenosyl-L-methionine. This chain is Radical S-adenosyl methionine domain-containing protein 1, mitochondrial (rsad1), found in Danio rerio (Zebrafish).